Here is a 398-residue protein sequence, read N- to C-terminus: Riboflavin biosynthesis protein RibBA (398 aa).

The segment at 1-199 (MFHPIEEALE…IKDLIEYRYN (199 aa)) is DHBP synthase. Residues 26–27 (RE), Asp-31, 138–142 (RAGHT), and Glu-162 contribute to the D-ribulose 5-phosphate site. Glu-27 serves as a coordination point for Mg(2+). Position 141 (His-141) interacts with Mg(2+). A GTP cyclohydrolase II region spans residues 200 to 398 (ITTLVNREVD…MKKLGHLLHF (199 aa)). 251–255 (RVHSE) is a binding site for GTP. Zn(2+) contacts are provided by Cys-256, Cys-267, and Cys-269. Residues Gln-272, 294 to 296 (EGR), and Thr-316 each bind GTP. Asp-328 acts as the Proton acceptor; for GTP cyclohydrolase activity in catalysis. Arg-330 acts as the Nucleophile; for GTP cyclohydrolase activity in catalysis. Residues Thr-351 and Lys-356 each contribute to the GTP site.

The protein in the N-terminal section; belongs to the DHBP synthase family. This sequence in the C-terminal section; belongs to the GTP cyclohydrolase II family. The cofactor is Mg(2+). It depends on Mn(2+) as a cofactor. Zn(2+) is required as a cofactor.

The catalysed reaction is D-ribulose 5-phosphate = (2S)-2-hydroxy-3-oxobutyl phosphate + formate + H(+). It catalyses the reaction GTP + 4 H2O = 2,5-diamino-6-hydroxy-4-(5-phosphoribosylamino)-pyrimidine + formate + 2 phosphate + 3 H(+). It participates in cofactor biosynthesis; riboflavin biosynthesis; 2-hydroxy-3-oxobutyl phosphate from D-ribulose 5-phosphate: step 1/1. The protein operates within cofactor biosynthesis; riboflavin biosynthesis; 5-amino-6-(D-ribitylamino)uracil from GTP: step 1/4. Catalyzes the conversion of D-ribulose 5-phosphate to formate and 3,4-dihydroxy-2-butanone 4-phosphate. In terms of biological role, catalyzes the conversion of GTP to 2,5-diamino-6-ribosylamino-4(3H)-pyrimidinone 5'-phosphate (DARP), formate and pyrophosphate. This chain is Riboflavin biosynthesis protein RibBA, found in Bacillus velezensis (strain DSM 23117 / BGSC 10A6 / LMG 26770 / FZB42) (Bacillus amyloliquefaciens subsp. plantarum).